Consider the following 329-residue polypeptide: Ketol-acid reductoisomerase (NADP(+)) (329 aa).

Positions 2-182 (VEIYYDDDAS…GGTRAGALRT (181 aa)) constitute a KARI N-terminal Rossmann domain. NADP(+) is bound by residues 25 to 28 (YGSQ), Ser51, and Ser53. His108 is a catalytic residue. Gly134 contributes to the NADP(+) binding site. In terms of domain architecture, KARI C-terminal knotted spans 183-328 (TFTEETETDL…AKLRPMMSWI (146 aa)). Asp191, Glu195, Glu227, and Glu231 together coordinate Mg(2+). Ser252 serves as a coordination point for substrate.

It belongs to the ketol-acid reductoisomerase family. Mg(2+) serves as cofactor.

The enzyme catalyses (2R)-2,3-dihydroxy-3-methylbutanoate + NADP(+) = (2S)-2-acetolactate + NADPH + H(+). The catalysed reaction is (2R,3R)-2,3-dihydroxy-3-methylpentanoate + NADP(+) = (S)-2-ethyl-2-hydroxy-3-oxobutanoate + NADPH + H(+). It functions in the pathway amino-acid biosynthesis; L-isoleucine biosynthesis; L-isoleucine from 2-oxobutanoate: step 2/4. Its pathway is amino-acid biosynthesis; L-valine biosynthesis; L-valine from pyruvate: step 2/4. Its function is as follows. Involved in the biosynthesis of branched-chain amino acids (BCAA). Catalyzes an alkyl-migration followed by a ketol-acid reduction of (S)-2-acetolactate (S2AL) to yield (R)-2,3-dihydroxy-isovalerate. In the isomerase reaction, S2AL is rearranged via a Mg-dependent methyl migration to produce 3-hydroxy-3-methyl-2-ketobutyrate (HMKB). In the reductase reaction, this 2-ketoacid undergoes a metal-dependent reduction by NADPH to yield (R)-2,3-dihydroxy-isovalerate. In Frankia casuarinae (strain DSM 45818 / CECT 9043 / HFP020203 / CcI3), this protein is Ketol-acid reductoisomerase (NADP(+)).